The following is a 121-amino-acid chain: Putative iron-sulfur cluster insertion protein ErpA (121 aa).

Positions 49, 113, and 115 each coordinate iron-sulfur cluster.

It belongs to the HesB/IscA family. In terms of assembly, homodimer. Iron-sulfur cluster is required as a cofactor.

Functionally, required for insertion of 4Fe-4S clusters. This is Putative iron-sulfur cluster insertion protein ErpA from Paraburkholderia phymatum (strain DSM 17167 / CIP 108236 / LMG 21445 / STM815) (Burkholderia phymatum).